The following is a 434-amino-acid chain: Rubisco accumulation factor 1.1, chloroplastic (434 aa).

A chloroplast-targeting transit peptide spans 1-51; the sequence is MLSLTATTLSSSIFTQSKTHGFFNTRPVYRKPFTTITSALIPASNRQAPPK. Residues 65–254 form an N-terminal alpha-helix region; that stretch reads IPPKFRSLDT…KAKKAVLREL (190 aa). Residues 273 to 419 are C-terminal beta sheet; it reads VPVVRLRFGE…GMVVLVVRPP (147 aa).

It belongs to the RAF family. In terms of assembly, homodimer.

The protein resides in the plastid. The protein localises to the chloroplast. Functionally, required for assembly or stability of RuBisCO. Acts at a postchaperonin step to fold and/or assemble the large subunit (rbcL) into RuBisCO. RAF1 binds first to a rbcL dimer (rbcL(2)), leading to a rbcL(8)-RAF1(4) complex formation. In the next step, RBCS displaces RAF1, thus resulting in holoenzyme formation. In Arabidopsis thaliana (Mouse-ear cress), this protein is Rubisco accumulation factor 1.1, chloroplastic.